The chain runs to 384 residues: S-adenosylmethionine synthase (384 aa).

Position 15 (His-15) interacts with ATP. Residue Asp-17 coordinates Mg(2+). Glu-43 is a binding site for K(+). Residues Glu-56 and Gln-99 each contribute to the L-methionine site. Residues 99–109 (QSPDINQGVDR) are flexible loop. ATP-binding positions include 164–166 (DAK), 230–231 (RF), Asp-239, 245–246 (RK), Ala-262, and Lys-266. Asp-239 contributes to the L-methionine binding site. Lys-270 is a binding site for L-methionine.

Belongs to the AdoMet synthase family. Homotetramer; dimer of dimers. It depends on Mg(2+) as a cofactor. K(+) is required as a cofactor.

It is found in the cytoplasm. The catalysed reaction is L-methionine + ATP + H2O = S-adenosyl-L-methionine + phosphate + diphosphate. Its pathway is amino-acid biosynthesis; S-adenosyl-L-methionine biosynthesis; S-adenosyl-L-methionine from L-methionine: step 1/1. Catalyzes the formation of S-adenosylmethionine (AdoMet) from methionine and ATP. The overall synthetic reaction is composed of two sequential steps, AdoMet formation and the subsequent tripolyphosphate hydrolysis which occurs prior to release of AdoMet from the enzyme. This is S-adenosylmethionine synthase from Citrobacter koseri (strain ATCC BAA-895 / CDC 4225-83 / SGSC4696).